Here is a 1139-residue protein sequence, read N- to C-terminus: Ras GTPase-activating protein nGAP (1139 aa).

A disordered region spans residues 1–87 (MQTPEVPAER…SRGLPKLKES (87 aa)). Serine 16 bears the Phosphoserine mark. Polar residues predominate over residues 17–36 (ISGTSTSEKPNSMDTANTSP). The 118-residue stretch at 41 to 158 (GFFSKRLKGS…WMENLRRTVQ (118 aa)) folds into the PH domain. Basic residues predominate over residues 45–56 (KRLKGSIKRTKS). A compositionally biased stretch (basic and acidic residues) spans 73–87 (STDDRSRGLPKLKES). Serine 89 carries the phosphoserine modification. In terms of domain architecture, C2 spans 149 to 267 (WMENLRRTVQ…TGRQFVEKWY (119 aa)). Residues 343 to 551 (GRAKDFLTDL…GGMKRFLLEI (209 aa)) enclose the Ras-GAP domain. Position 620 is a phosphothreonine (threonine 620). Residue serine 663 is modified to Phosphoserine. Disordered stretches follow at residues 684 to 704 (ASSQ…LPNG), 751 to 782 (ETQS…LSFQ), 803 to 869 (SLEN…GQAQ), 910 to 953 (EPVQ…SATM), and 1116 to 1139 (NGIS…NSSC). Composition is skewed to polar residues over residues 751 to 760 (ETQSTPQSAP) and 803 to 818 (SLEN…QSNS). A compositionally biased stretch (basic and acidic residues) spans 833 to 855 (DFTKRSTQSEDFSRRHTVPDRHI). Serine 864 bears the Phosphoserine mark. The segment covering 916-928 (SRSRQQSSSSRES) has biased composition (low complexity).

Interacts with PEAK1.

Its function is as follows. Inhibitory regulator of the Ras-cyclic AMP pathway. The protein is Ras GTPase-activating protein nGAP (RASAL2) of Homo sapiens (Human).